A 639-amino-acid chain; its full sequence is Extracellular metalloproteinase NpIII (639 aa).

Positions 1 to 16 are cleaved as a signal peptide; sequence MHMLLFIGALALPVFV. Positions 17 to 245 are excised as a propeptide; sequence CTQSCEPASL…IHGVVDYVSE (229 aa). N-linked (GlcNAc...) asparagine glycosylation is found at asparagine 287, asparagine 320, asparagine 336, and asparagine 368. Histidine 429 lines the Zn(2+) pocket. Glutamate 430 is a catalytic residue. Histidine 433 serves as a coordination point for Zn(2+). Asparagine 509 carries N-linked (GlcNAc...) asparagine glycosylation.

The protein belongs to the peptidase M36 family. It depends on Zn(2+) as a cofactor.

It is found in the secreted. Its function is as follows. Secreted metalloproteinase that allows assimilation of proteinaceous substrates. This is Extracellular metalloproteinase NpIII (NpIII) from Aspergillus oryzae (strain ATCC 42149 / RIB 40) (Yellow koji mold).